Consider the following 426-residue polypeptide: Histidine--tRNA ligase (426 aa).

This sequence belongs to the class-II aminoacyl-tRNA synthetase family. As to quaternary structure, homodimer.

Its subcellular location is the cytoplasm. It carries out the reaction tRNA(His) + L-histidine + ATP = L-histidyl-tRNA(His) + AMP + diphosphate + H(+). This chain is Histidine--tRNA ligase, found in Streptococcus equi subsp. zooepidemicus (strain H70).